We begin with the raw amino-acid sequence, 888 residues long: DNA mismatch repair protein MutS (888 aa).

641-648 (GPNMAGKS) serves as a coordination point for ATP.

It belongs to the DNA mismatch repair MutS family.

Functionally, this protein is involved in the repair of mismatches in DNA. It is possible that it carries out the mismatch recognition step. This protein has a weak ATPase activity. The protein is DNA mismatch repair protein MutS of Rickettsia bellii (strain OSU 85-389).